We begin with the raw amino-acid sequence, 80 residues long: Acyl carrier protein (80 aa).

The Carrier domain maps to 2–77; it reads SDIEQRVKKI…QAIDYAKAHV (76 aa). O-(pantetheine 4'-phosphoryl)serine is present on Ser-37.

It belongs to the acyl carrier protein (ACP) family. In terms of processing, 4'-phosphopantetheine is transferred from CoA to a specific serine of apo-ACP by AcpS. This modification is essential for activity because fatty acids are bound in thioester linkage to the sulfhydryl of the prosthetic group.

It is found in the cytoplasm. It functions in the pathway lipid metabolism; fatty acid biosynthesis. Carrier of the growing fatty acid chain in fatty acid biosynthesis. This chain is Acyl carrier protein, found in Herminiimonas arsenicoxydans.